The chain runs to 412 residues: MSQSKGMVVLAYSGGLDTSCILVWLKEQGYDVIAYLANIGQNEDFEAARKKAVNLGAKKVYIEDMRQQFVEEYIWPAVQANAIYEDRYLLGTSLARPCIAKKQVEIAKKEAAEYVSHGATGKGNDQIRFELTCYALYPEVKIIAPWRMPEFYNRFRGRSDLMEYAKKHNIPVPVTPKDPWSMDENIMHISYEGGILENPKNHAPPGLYLKTKNPATSPNEPDILEIEFKKGVPVKVTNTKEKTQHSSALGLFCYLNEVAGKHGVGRIDIVENRFIGMKSRGIYETPAGTILYQAHLDVEAFTMDREVRKIKQHLSQRFAEQIYNGFWYSPECEFVRSCITKSQEMVEGKVLVSVLKGQVYVLGREAPHSLYNEELVSMDVQGDYDPADACGFIRINALRLKEFHRLQKSKKN.

Residues 11–19 and Ala37 each bind ATP; that span reads AYSGGLDTS. L-citrulline contacts are provided by Tyr88 and Ser93. Residue 116–124 participates in ATP binding; it reads SHGATGKGN. L-aspartate-binding residues include Thr120, Asn124, and Asp125. An L-citrulline-binding site is contributed by Asn124. Residues Arg128, Ser181, Ser190, Glu271, and Tyr283 each coordinate L-citrulline.

The protein belongs to the argininosuccinate synthase family. Homotetramer.

It is found in the cytoplasm. The protein localises to the cytosol. It carries out the reaction L-citrulline + L-aspartate + ATP = 2-(N(omega)-L-arginino)succinate + AMP + diphosphate + H(+). It functions in the pathway amino-acid biosynthesis; L-arginine biosynthesis; L-arginine from L-ornithine and carbamoyl phosphate: step 2/3. The protein operates within nitrogen metabolism; urea cycle; (N(omega)-L-arginino)succinate from L-aspartate and L-citrulline: step 1/1. One of the enzymes of the urea cycle, the metabolic pathway transforming neurotoxic amonia produced by protein catabolism into inocuous urea in the liver of ureotelic animals. Catalyzes the formation of arginosuccinate from aspartate, citrulline and ATP and together with ASL it is responsible for the biosynthesis of arginine in most body tissues. This Xenopus tropicalis (Western clawed frog) protein is Argininosuccinate synthase.